The primary structure comprises 104 residues: Cell division protein FtsL (104 aa).

Topologically, residues 1–20 (MSKPSLTLPRIVLHDLWQHK) are cytoplasmic. A helical transmembrane segment spans residues 21-43 (WILLLALLVLSNAVAVVYTSHVS). At 44–104 (RKLTTEWDQL…PSEEIVVKVP (61 aa)) the chain is on the periplasmic side.

Belongs to the FtsL family. As to quaternary structure, part of a complex composed of FtsB, FtsL and FtsQ.

Its subcellular location is the cell inner membrane. In terms of biological role, essential cell division protein. May link together the upstream cell division proteins, which are predominantly cytoplasmic, with the downstream cell division proteins, which are predominantly periplasmic. This chain is Cell division protein FtsL, found in Shewanella oneidensis (strain ATCC 700550 / JCM 31522 / CIP 106686 / LMG 19005 / NCIMB 14063 / MR-1).